Consider the following 383-residue polypeptide: Ribosomal RNA large subunit methyltransferase G (383 aa).

The protein belongs to the methyltransferase superfamily. RlmG family.

It localises to the cytoplasm. It catalyses the reaction guanosine(1835) in 23S rRNA + S-adenosyl-L-methionine = N(2)-methylguanosine(1835) in 23S rRNA + S-adenosyl-L-homocysteine + H(+). Its function is as follows. Specifically methylates the guanine in position 1835 (m2G1835) of 23S rRNA. This Shewanella amazonensis (strain ATCC BAA-1098 / SB2B) protein is Ribosomal RNA large subunit methyltransferase G.